Here is a 282-residue protein sequence, read N- to C-terminus: Formamidopyrimidine-DNA glycosylase (282 aa).

P2 functions as the Schiff-base intermediate with DNA in the catalytic mechanism. The active-site Proton donor is E3. The Proton donor; for beta-elimination activity role is filled by K60. DNA is bound by residues H99, R118, and K163. Residues 248–282 (WVYRRSGKNCKKCGEKILREKICGRSTHWCPNCQK) form an FPG-type zinc finger. The Proton donor; for delta-elimination activity role is filled by R272.

This sequence belongs to the FPG family. As to quaternary structure, monomer. It depends on Zn(2+) as a cofactor.

The enzyme catalyses Hydrolysis of DNA containing ring-opened 7-methylguanine residues, releasing 2,6-diamino-4-hydroxy-5-(N-methyl)formamidopyrimidine.. It catalyses the reaction 2'-deoxyribonucleotide-(2'-deoxyribose 5'-phosphate)-2'-deoxyribonucleotide-DNA = a 3'-end 2'-deoxyribonucleotide-(2,3-dehydro-2,3-deoxyribose 5'-phosphate)-DNA + a 5'-end 5'-phospho-2'-deoxyribonucleoside-DNA + H(+). Involved in base excision repair of DNA damaged by oxidation or by mutagenic agents. Acts as a DNA glycosylase that recognizes and removes damaged bases. Has a preference for oxidized purines, such as 7,8-dihydro-8-oxoguanine (8-oxoG). Has AP (apurinic/apyrimidinic) lyase activity and introduces nicks in the DNA strand. Cleaves the DNA backbone by beta-delta elimination to generate a single-strand break at the site of the removed base with both 3'- and 5'-phosphates. In Prochlorococcus marinus (strain NATL2A), this protein is Formamidopyrimidine-DNA glycosylase.